Consider the following 133-residue polypeptide: Large ribosomal subunit protein bL12 (133 aa).

The interval 98 to 118 (DMVESTPKPIKEGTGKEDAED) is disordered.

This sequence belongs to the bacterial ribosomal protein bL12 family. Homodimer. Part of the ribosomal stalk of the 50S ribosomal subunit. Forms a multimeric L10(L12)X complex, where L10 forms an elongated spine to which 2 to 4 L12 dimers bind in a sequential fashion. Binds GTP-bound translation factors.

Forms part of the ribosomal stalk which helps the ribosome interact with GTP-bound translation factors. Is thus essential for accurate translation. This Crocosphaera subtropica (strain ATCC 51142 / BH68) (Cyanothece sp. (strain ATCC 51142)) protein is Large ribosomal subunit protein bL12.